Consider the following 317-residue polypeptide: Hps1-dma1 cluster cytochrome P450 monooxygenase cyp3.1 (317 aa).

Residues 183–205 (PAIETDRKTSSHSRSPTALADKQ) are disordered. Cysteine 260 contributes to the heme binding site.

It belongs to the cytochrome P450 family. Requires heme as cofactor.

It participates in secondary metabolite biosynthesis. Cytochrome P450 monooxygenase; part of the hps1-dma1 gene cluster that probably mediates the biosynthesis a derivative of cyclopiazonic acid (CPA). The hybrid polyketide synthase-nonribosomal peptide synthetase (PKS-NRPS) nps1 might incorporates acetyl-CoA, malonyl-CoA, and tryptophan (Trp) and utilizes a C-terminal redox-incompetent reductase domain to make and release the tryptophan tetramic acid, cyclo-acetoacetyl-L-tryptophan (c-AATrp), as the first intermediate in the pathway. In addition, the cluster also includes the tryptophan dimethylallyltransferase dma1, the FAD-dependent oxidoreductase toxD, the cytochrome P450 monooxygenase cyp3.1 and the methyltransferase DOTSEDRAFT_139328; the latter 2 being not present in all CPA-producing fungi but involved in additional modifications that occur in biosynthesis the of a range of CPA and CPA-like products. Further studies are required to clarify whether the CPA-like hps1-dma1 cluster is functional or a non-functional relic reflecting evolution of D.septosporum. The protein is Hps1-dma1 cluster cytochrome P450 monooxygenase cyp3.1 (cyp3.1) of Dothistroma septosporum (strain NZE10 / CBS 128990) (Red band needle blight fungus).